Consider the following 535-residue polypeptide: Peptide chain release factor 3 (535 aa).

Positions 8–276 (ARRRTFAIIS…ALVDLAPQPG (269 aa)) constitute a tr-type G domain. Residues 17–24 (SHPDAGKT), 85–89 (DTPGH), and 139–142 (NKMD) contribute to the GTP site.

Belongs to the TRAFAC class translation factor GTPase superfamily. Classic translation factor GTPase family. PrfC subfamily.

It localises to the cytoplasm. In terms of biological role, increases the formation of ribosomal termination complexes and stimulates activities of RF-1 and RF-2. It binds guanine nucleotides and has strong preference for UGA stop codons. It may interact directly with the ribosome. The stimulation of RF-1 and RF-2 is significantly reduced by GTP and GDP, but not by GMP. This is Peptide chain release factor 3 from Bordetella avium (strain 197N).